The sequence spans 276 residues: Large ribosomal subunit protein uL2 (276 aa).

A disordered region spans residues 224-265 (VMNPVDHPHGGGEGRTASGRHPVSPWGLPTKGYKTRNNKRTD).

The protein belongs to the universal ribosomal protein uL2 family. As to quaternary structure, part of the 50S ribosomal subunit. Forms a bridge to the 30S subunit in the 70S ribosome.

Functionally, one of the primary rRNA binding proteins. Required for association of the 30S and 50S subunits to form the 70S ribosome, for tRNA binding and peptide bond formation. It has been suggested to have peptidyltransferase activity; this is somewhat controversial. Makes several contacts with the 16S rRNA in the 70S ribosome. This Dichelobacter nodosus (strain VCS1703A) protein is Large ribosomal subunit protein uL2.